Here is a 212-residue protein sequence, read N- to C-terminus: Golgi-associated RAB2 interactor protein 5A (212 aa).

Disordered regions lie at residues 1–21 (MKGGRDLKAARGGADRPLAPA) and 162–212 (PFTH…LWGL). Over residues 169–185 (APEEEEEEEEEEEEEEV) the composition is skewed to acidic residues.

This sequence belongs to the GARIN family. Interacts (via N-terminus) with RAB2B (in GTP-bound form). In terms of tissue distribution, expressed in testis (at protein level).

The protein localises to the golgi apparatus. In terms of biological role, RAB2B effector protein which promotes cytosolic DNA-induced innate immune responses. Regulates IFN responses against DNA viruses by regulating the CGAS-STING signaling axis. In Mus musculus (Mouse), this protein is Golgi-associated RAB2 interactor protein 5A.